The primary structure comprises 461 residues: Ribonuclease inhibitor (461 aa).

At Ser-2 the chain carries N-acetylserine. Positions 2 to 11 (SLDIQSLDIQ) are 2 X 5 AA tandem repeats of S-L-D-I-Q. LRR repeat units lie at residues 20–48 (WAEL…CKDI), 49–76 (SSAL…VHCV), 77–105 (LQGL…CGVL), 106–133 (SSTL…LQLL), 134–162 (CEGL…CEPL), 163–190 (ASVL…VRVL), 191–219 (CQGL…CRDL), 220–247 (CGIV…MAEL), 248–276 (CPGL…CGDL), 277–304 (CRVL…ARLL), 305–333 (CETL…CSHF), 334–361 (SSVL…VREL), 362–390 (CQGL…CSSL), 391–418 (AATL…ILQL), and 419–447 (VESV…EDRL). Thr-82 bears the Phosphothreonine mark. A Phosphoserine modification is found at Ser-91.

As to quaternary structure, forms high-affinity heterodimers with RNASE1, ANG and RNASE2. The N-terminus is blocked. In terms of processing, at least 30 of the 32 cysteine residues are in the reduced form.

The protein resides in the cytoplasm. Its subcellular location is the nucleus. Functionally, ribonuclease inhibitor which inhibits RNASE1, RNASE2 and angiogenin (ANG). May play a role in redox homeostasis. Required to inhibit the cytotoxic tRNA ribonuclease activity of ANG in the cytoplasm in absence of stress. Relocates to the nucleus in response to stress, relieving inhibition of ANG in the cytoplasm, and inhibiting the angiogenic activity of ANG in the nucleus. The polypeptide is Ribonuclease inhibitor (Homo sapiens (Human)).